Consider the following 403-residue polypeptide: Phosphopentomutase (403 aa).

Mn(2+)-binding residues include Asp13, Asp298, His303, Asp339, His340, and His351.

This sequence belongs to the phosphopentomutase family. The cofactor is Mn(2+).

The protein resides in the cytoplasm. It catalyses the reaction 2-deoxy-alpha-D-ribose 1-phosphate = 2-deoxy-D-ribose 5-phosphate. The catalysed reaction is alpha-D-ribose 1-phosphate = D-ribose 5-phosphate. The protein operates within carbohydrate degradation; 2-deoxy-D-ribose 1-phosphate degradation; D-glyceraldehyde 3-phosphate and acetaldehyde from 2-deoxy-alpha-D-ribose 1-phosphate: step 1/2. In terms of biological role, isomerase that catalyzes the conversion of deoxy-ribose 1-phosphate (dRib-1-P) and ribose 1-phosphate (Rib-1-P) to deoxy-ribose 5-phosphate (dRib-5-P) and ribose 5-phosphate (Rib-5-P), respectively. The chain is Phosphopentomutase from Streptococcus thermophilus (strain CNRZ 1066).